The primary structure comprises 221 residues: Vesicle transport v-SNARE 11 (221 aa).

The residue at position 2 (Ser2) is an N-acetylserine. Over 2–198 (SDVFDGYERQ…MTRRMNKNKW (197 aa)) the chain is Cytoplasmic. The stretch at 32–93 (EQKKQKLSEI…FKTEVKRITS (62 aa)) forms a coiled coil. A helical; Anchor for type IV membrane protein transmembrane segment spans residues 199 to 219 (TIGAIIIALIAAIFIILYFKL). Over 220–221 (TK) the chain is Vesicular.

Belongs to the VTI1 family. Forms SNARE complexes with the t-SNAREs SYP51 and either SYP21 or SYP22 in the PVC, and with a much lower affinity with SYP61 in the TGN. Does not interact with SYP41, SYP42 or VPS45. Binds to EPSIN1. Interacts with SCYL2B. In terms of tissue distribution, expressed in roots, stems, flowers and leaves.

It localises to the golgi apparatus. It is found in the trans-Golgi network membrane. The protein localises to the prevacuolar compartment membrane. Its subcellular location is the vacuole membrane. Its function is as follows. Functions as a v-SNARE responsible for targeting AtELP-containing vesicles from the trans-Golgi network (TGN) to the prevacuolar compartment (PVC) and mediates liposome fusion. May be also involved in retrograde traffic to the cis-Golgi. Promotes the formation of vacuolar membrane 'bulbs'. Necessary to deliver proteins to the lytic vacuole, but seems not involved in storage proteins transport. Required for amyloplast sedimentation in the endodermis during shoot gravitropism, which are thus acting as statoliths. Expression in the endodermis is essential for the shoot gravitropic response, whereas expression in other tissues may be responsible for the correct stem and leaf shape. This Arabidopsis thaliana (Mouse-ear cress) protein is Vesicle transport v-SNARE 11.